A 250-amino-acid polypeptide reads, in one-letter code: tRNA (guanine-N(1)-)-methyltransferase (250 aa).

Residues Gly-116 and 136-141 contribute to the S-adenosyl-L-methionine site; that span reads IGDYVL.

It belongs to the RNA methyltransferase TrmD family. As to quaternary structure, homodimer.

Its subcellular location is the cytoplasm. The catalysed reaction is guanosine(37) in tRNA + S-adenosyl-L-methionine = N(1)-methylguanosine(37) in tRNA + S-adenosyl-L-homocysteine + H(+). Functionally, specifically methylates guanosine-37 in various tRNAs. The chain is tRNA (guanine-N(1)-)-methyltransferase from Pseudomonas savastanoi pv. phaseolicola (strain 1448A / Race 6) (Pseudomonas syringae pv. phaseolicola (strain 1448A / Race 6)).